The primary structure comprises 130 residues: MAQVEYRGTGRRKNSVARVRLVPGEGNITVNGRDVRSYLPFESLILDINQAFDVTETKGNYDVLVNVQGGGFTGQAQAIRHGISRALLEADPEYRGSLKRAGLLTRDPRMKERKKPGLKKARRSPQFSKR.

Residues 98–130 are disordered; that stretch reads LKRAGLLTRDPRMKERKKPGLKKARRSPQFSKR. Basic residues predominate over residues 111-130; that stretch reads KERKKPGLKKARRSPQFSKR.

This sequence belongs to the universal ribosomal protein uS9 family.

The sequence is that of Small ribosomal subunit protein uS9 from Staphylococcus saprophyticus subsp. saprophyticus (strain ATCC 15305 / DSM 20229 / NCIMB 8711 / NCTC 7292 / S-41).